We begin with the raw amino-acid sequence, 263 residues long: tRNA (guanine-N(7)-)-methyltransferase (263 aa).

Positions 1–39 (MVHHGQMHAQPGVGLRPDTPVASGQLPSTSIRSRRSGIS) are disordered. Residues E82, D107, N136, and D159 each contribute to the S-adenosyl-L-methionine site. D159 is an active-site residue. Substrate contacts are provided by residues K163, D195, and 232-235 (TKYE).

This sequence belongs to the class I-like SAM-binding methyltransferase superfamily. TrmB family.

It carries out the reaction guanosine(46) in tRNA + S-adenosyl-L-methionine = N(7)-methylguanosine(46) in tRNA + S-adenosyl-L-homocysteine. It functions in the pathway tRNA modification; N(7)-methylguanine-tRNA biosynthesis. Functionally, catalyzes the formation of N(7)-methylguanine at position 46 (m7G46) in tRNA. This is tRNA (guanine-N(7)-)-methyltransferase from Mycobacterium bovis (strain ATCC BAA-935 / AF2122/97).